The chain runs to 1353 residues: Protein prickle (1353 aa).

Disordered stretches follow at residues 130 to 206, 266 to 292, and 500 to 540; these read VDDG…TKRN, QEEE…PPLP, and AKYS…SAHA. The segment covering 147 to 165 has biased composition (low complexity); the sequence is TPTATATAGRPLFPLSSSP. A compositionally biased stretch (basic residues) spans 166–178; the sequence is RRSKKLLRSLRAH. The segment covering 179–189 has biased composition (basic and acidic residues); it reads VKGESRPEKPA. Over residues 514–532 the composition is skewed to low complexity; sequence LSPALSTPSPPSLLHHPAA. In terms of domain architecture, PET spans 548–656; the sequence is MDMQRQSHSD…NVRQLMSARP (109 aa). LIM zinc-binding domains are found at residues 655–719, 720–780, and 781–843; these read RPCD…ETLK, PRCS…MFAE, and YCDY…GEPP. Disordered regions lie at residues 840–892, 933–962, and 1062–1303; these read GEPP…HQAS, HCRS…NMSP, and ADIM…SSSS. Residues 861–892 show a composition bias toward low complexity; sequence TQRVRPQTRITSSHASSSPPMSPQQQQQHQAS. Polar residues-rich tracts occupy residues 952 to 962 and 1111 to 1120; these read RASSTSHNMSP and SLNTPLSAHS. Over residues 1130–1142 the composition is skewed to low complexity; sequence SILSGASSSSPMS. A compositionally biased stretch (basic and acidic residues) spans 1177-1205; sequence GDKDRDRDRERDRDRDRDKGGDKDRESGR. Basic residues-rich tracts occupy residues 1207 to 1220 and 1228 to 1240; these read GPGH…RRKS and NHHR…RSHS. Positions 1269–1284 are enriched in basic and acidic residues; the sequence is ETAHKSPRQQRERERE.

This sequence belongs to the prickle / espinas / testin family. As to quaternary structure, interacts with dsh; PET and LIM domains interact with dsh DEP domain, in wing cells. Interacts with Vang in photoreceptor cells.

It is found in the cell membrane. Acts in a planar cell polarity (PCP) complex; polarization along the apical/basal axis of epithelial cells. PCP signaling in the wing disk requires the receptor fz and the cytoplasmic proteins dsh and pk. These act in a feedback loop leading to activation of the jnk cascade and subsequent polarized arrangement of hairs and bristles. Dgo and pk compete with one another for dsh binding, thereby modulating fz dsh activity and ensuring tight control over fz PCP signaling. Vang, stan and pk function together to regulate the establishment of tissue polarity in the adult eye. In Drosophila pseudoobscura pseudoobscura (Fruit fly), this protein is Protein prickle.